Consider the following 155-residue polypeptide: Cytochrome c oxidase subunit 4, mitochondrial (155 aa).

The N-terminal 25 residues, 1 to 25, are a transit peptide targeting the mitochondrion; the sequence is MLSLRQSIRFFKPATRTLCSSRYLL. Thr-55 is subject to Phosphothreonine. Cys-111, His-119, Cys-134, and Cys-137 together coordinate Zn(2+).

This sequence belongs to the cytochrome c oxidase subunit 5B family. In terms of assembly, component of the cytochrome c oxidase (complex IV, CIV), a multisubunit enzyme composed of 12 subunits. The complex is composed of a catalytic core of 3 subunits COX1, COX2 and COX3, encoded in the mitochondrial DNA, and 9 supernumerary subunits COX4, COX5A (or COX5B), COX6, COX7, COX8, COX9, COX12, COX13 and COX26, which are encoded in the nuclear genome. The complex exists as a monomer or a dimer and forms supercomplexes (SCs) in the inner mitochondrial membrane with a dimer of ubiquinol-cytochrome c oxidoreductase (cytochrome b-c1 complex, complex III, CIII), resulting in 2 different assemblies (supercomplexes III(2)IV and III(2)IV(2)).

It is found in the mitochondrion inner membrane. It participates in energy metabolism; oxidative phosphorylation. Functionally, component of the cytochrome c oxidase, the last enzyme in the mitochondrial electron transport chain which drives oxidative phosphorylation. The respiratory chain contains 3 multisubunit complexes succinate dehydrogenase (complex II, CII), ubiquinol-cytochrome c oxidoreductase (cytochrome b-c1 complex, complex III, CIII) and cytochrome c oxidase (complex IV, CIV), that cooperate to transfer electrons derived from NADH and succinate to molecular oxygen, creating an electrochemical gradient over the inner membrane that drives transmembrane transport and the ATP synthase. Cytochrome c oxidase is the component of the respiratory chain that catalyzes the reduction of oxygen to water. Electrons originating from reduced cytochrome c in the intermembrane space (IMS) are transferred via the dinuclear copper A center (CU(A)) of COX2 and heme A of COX1 to the active site in COX1, a binuclear center (BNC) formed by heme A3 and copper B (CU(B)). The BNC reduces molecular oxygen to 2 water molecules using 4 electrons from cytochrome c in the IMS and 4 protons from the mitochondrial matrix. The protein is Cytochrome c oxidase subunit 4, mitochondrial (COX4) of Saccharomyces cerevisiae (strain ATCC 204508 / S288c) (Baker's yeast).